The chain runs to 175 residues: Transcription factor E (175 aa).

The 85-residue stretch at 4 to 88 (AEDLFINLAK…YWKPNIDQIN (85 aa)) folds into the HTH TFE/IIEalpha-type domain.

The protein belongs to the TFE family. In terms of assembly, monomer. Interaction with RNA polymerase subunits RpoF and RpoE is necessary for Tfe stimulatory transcription activity. Able to interact with Tbp and RNA polymerase in the absence of DNA promoter. Interacts both with the preinitiation and elongation complexes.

Transcription factor that plays a role in the activation of archaeal genes transcribed by RNA polymerase. Facilitates transcription initiation by enhancing TATA-box recognition by TATA-box-binding protein (Tbp), and transcription factor B (Tfb) and RNA polymerase recruitment. Not absolutely required for transcription in vitro, but particularly important in cases where Tbp or Tfb function is not optimal. It dynamically alters the nucleic acid-binding properties of RNA polymerases by stabilizing the initiation complex and destabilizing elongation complexes. Seems to translocate with the RNA polymerase following initiation and acts by binding to the non template strand of the transcription bubble in elongation complexes. This chain is Transcription factor E, found in Saccharolobus islandicus (strain Y.N.15.51 / Yellowstone #2) (Sulfolobus islandicus).